The following is a 532-amino-acid chain: Light-independent protochlorophyllide reductase subunit B (532 aa).

Asp36 contributes to the [4Fe-4S] cluster binding site. Asp292 functions as the Proton donor in the catalytic mechanism. Residue 428–429 (GL) coordinates substrate. The disordered stretch occupies residues 445 to 486 (EEEEPESISNGHAAAAGSEGGVPDSGEAGDAGDTDGMPWSPD).

It belongs to the ChlB/BchB/BchZ family. Protochlorophyllide reductase is composed of three subunits; BchL, BchN and BchB. Forms a heterotetramer of two BchB and two BchN subunits. [4Fe-4S] cluster serves as cofactor.

The enzyme catalyses chlorophyllide a + oxidized 2[4Fe-4S]-[ferredoxin] + 2 ADP + 2 phosphate = protochlorophyllide a + reduced 2[4Fe-4S]-[ferredoxin] + 2 ATP + 2 H2O. It participates in porphyrin-containing compound metabolism; bacteriochlorophyll biosynthesis (light-independent). Functionally, component of the dark-operative protochlorophyllide reductase (DPOR) that uses Mg-ATP and reduced ferredoxin to reduce ring D of protochlorophyllide (Pchlide) to form chlorophyllide a (Chlide). This reaction is light-independent. The NB-protein (BchN-BchB) is the catalytic component of the complex. This Chlorobium phaeobacteroides (strain BS1) protein is Light-independent protochlorophyllide reductase subunit B.